The following is a 328-amino-acid chain: Probable cell division protein WhiA (328 aa).

The segment at residues 275–308 (SLEELGRLAEPPMTKDAVAGRIRRLLSMADKRAE) is a DNA-binding region (H-T-H motif).

It belongs to the WhiA family.

Involved in cell division and chromosome segregation. The chain is Probable cell division protein WhiA from Corynebacterium jeikeium (strain K411).